The following is a 430-amino-acid chain: Replication protein A 32 kDa subunit C (430 aa).

The interval 14-46 is disordered; it reads MPSQRSGAPAPEYSAAGTGAAAAPSPSKPRDPR. The segment covering 23–38 has biased composition (low complexity); it reads APEYSAAGTGAAAAPS. The OB DNA-binding region spans 86-160; that stretch reads VRVLGRVVSV…QGLARSIRPI (75 aa).

It belongs to the replication factor A protein 2 family. As to quaternary structure, heterotrimer of RPA1, RPA2 and RPA3 (canonical replication protein A complex). Interacts with RPA1C and RPA3. Phosphorylated in a cell-cycle-dependent manner (from the S phase until mitosis). In response to DNA damage, recruited to DNA-repair nuclear foci, as a hypophosphorylated form.

It localises to the nucleus. Its function is as follows. Component of the replication protein A complex (RPA) required for DNA recombination, repair and replication. The activity of RPA is mediated by single-stranded DNA binding and protein interactions. This is Replication protein A 32 kDa subunit C (RPA2C) from Oryza sativa subsp. japonica (Rice).